The chain runs to 490 residues: ATP synthase subunit beta, chloroplastic (490 aa).

Phosphothreonine is present on Thr-6. Ser-13 is modified (phosphoserine). 172–179 contributes to the ATP binding site; the sequence is GGAGVGKT.

Belongs to the ATPase alpha/beta chains family. In terms of assembly, F-type ATPases have 2 components, CF(1) - the catalytic core - and CF(0) - the membrane proton channel. CF(1) has five subunits: alpha(3), beta(3), gamma(1), delta(1), epsilon(1). CF(0) has four main subunits: a(1), b(1), b'(1) and c(9-12).

The protein resides in the plastid. It is found in the chloroplast thylakoid membrane. The catalysed reaction is ATP + H2O + 4 H(+)(in) = ADP + phosphate + 5 H(+)(out). Produces ATP from ADP in the presence of a proton gradient across the membrane. The catalytic sites are hosted primarily by the beta subunits. The polypeptide is ATP synthase subunit beta, chloroplastic (Aethionema cordifolium (Lebanon stonecress)).